The following is a 293-amino-acid chain: Shikimate kinase (293 aa).

87 to 97 (PLAGGLKSSSA) is an ATP binding site.

Belongs to the GHMP kinase family. Archaeal shikimate kinase subfamily.

The protein resides in the cytoplasm. The enzyme catalyses shikimate + ATP = 3-phosphoshikimate + ADP + H(+). It functions in the pathway metabolic intermediate biosynthesis; chorismate biosynthesis; chorismate from D-erythrose 4-phosphate and phosphoenolpyruvate: step 5/7. This is Shikimate kinase from Methanosarcina mazei (strain ATCC BAA-159 / DSM 3647 / Goe1 / Go1 / JCM 11833 / OCM 88) (Methanosarcina frisia).